Here is a 467-residue protein sequence, read N- to C-terminus: Putative laccase-16 (467 aa).

Plastocyanin-like domains are found at residues 7–88, 98–225, and 318–451; these read VLGS…PKHG, KEIP…YTDS, and DFPN…KDGK. Residues His-22, His-24, His-67, and His-69 each coordinate Cu cation. His-368, His-371, His-373, His-430, Cys-431, His-432, His-436, and Met-441 together coordinate Cu cation.

Belongs to the multicopper oxidase family. It depends on Cu cation as a cofactor.

The protein resides in the secreted. The protein localises to the extracellular space. It localises to the apoplast. It catalyses the reaction 4 hydroquinone + O2 = 4 benzosemiquinone + 2 H2O. In terms of biological role, lignin degradation and detoxification of lignin-derived products. The sequence is that of Putative laccase-16 (LAC16) from Oryza sativa subsp. japonica (Rice).